The chain runs to 330 residues: tRNA U34 carboxymethyltransferase (330 aa).

Carboxy-S-adenosyl-L-methionine contacts are provided by residues K91, W105, K110, G130, 152-154 (DPS), 181-182 (IE), M196, Y200, and R315.

The protein belongs to the class I-like SAM-binding methyltransferase superfamily. CmoB family. In terms of assembly, homotetramer.

It carries out the reaction carboxy-S-adenosyl-L-methionine + 5-hydroxyuridine(34) in tRNA = 5-carboxymethoxyuridine(34) in tRNA + S-adenosyl-L-homocysteine + H(+). Catalyzes carboxymethyl transfer from carboxy-S-adenosyl-L-methionine (Cx-SAM) to 5-hydroxyuridine (ho5U) to form 5-carboxymethoxyuridine (cmo5U) at position 34 in tRNAs. This Shewanella frigidimarina (strain NCIMB 400) protein is tRNA U34 carboxymethyltransferase.